A 374-amino-acid polypeptide reads, in one-letter code: DNA replication and repair protein RecF (374 aa).

30–37 is a binding site for ATP; the sequence is GENAQGKT.

The protein belongs to the RecF family.

The protein resides in the cytoplasm. In terms of biological role, the RecF protein is involved in DNA metabolism; it is required for DNA replication and normal SOS inducibility. RecF binds preferentially to single-stranded, linear DNA. It also seems to bind ATP. This is DNA replication and repair protein RecF from Pediococcus pentosaceus (strain ATCC 25745 / CCUG 21536 / LMG 10740 / 183-1w).